Reading from the N-terminus, the 318-residue chain is Malate dehydrogenase (318 aa).

NAD(+)-binding positions include 10–15 and aspartate 34; that span reads GGGQIG. Positions 83 and 89 each coordinate substrate. NAD(+)-binding positions include asparagine 96 and 119-121; that span reads LSN. Substrate is bound by residues asparagine 121 and arginine 152. Histidine 176 acts as the Proton acceptor in catalysis.

It belongs to the LDH/MDH superfamily. MDH type 3 family.

It catalyses the reaction (S)-malate + NAD(+) = oxaloacetate + NADH + H(+). Catalyzes the reversible oxidation of malate to oxaloacetate. In Syntrophotalea carbinolica (strain DSM 2380 / NBRC 103641 / GraBd1) (Pelobacter carbinolicus), this protein is Malate dehydrogenase.